The chain runs to 513 residues: Xylose import ATP-binding protein XylG (513 aa).

ABC transporter domains lie at 5 to 242 (LEMK…VGRE) and 259 to 505 (LRIE…LRSE). 37–44 (GENGSGKS) is a binding site for ATP.

The protein belongs to the ABC transporter superfamily. Xylose importer (TC 3.A.1.2.4) family. As to quaternary structure, the complex is composed of two ATP-binding proteins (XylG), two transmembrane proteins (XylH) and a solute-binding protein (XylF).

It localises to the cell inner membrane. The enzyme catalyses D-xylose(out) + ATP + H2O = D-xylose(in) + ADP + phosphate + H(+). In terms of biological role, part of the ABC transporter complex XylFGH involved in xylose import. Responsible for energy coupling to the transport system. The polypeptide is Xylose import ATP-binding protein XylG (Escherichia coli (strain UTI89 / UPEC)).